A 96-amino-acid chain; its full sequence is Small ribosomal subunit protein bS6c (96 aa).

It belongs to the bacterial ribosomal protein bS6 family.

The protein resides in the plastid. It localises to the chloroplast. In terms of biological role, binds together with bS18 to 16S ribosomal RNA. This Trieres chinensis (Marine centric diatom) protein is Small ribosomal subunit protein bS6c (rps6).